The chain runs to 340 residues: UDP-3-O-acylglucosamine N-acyltransferase (340 aa).

Catalysis depends on histidine 238, which acts as the Proton acceptor.

The protein belongs to the transferase hexapeptide repeat family. LpxD subfamily. As to quaternary structure, homotrimer.

It carries out the reaction a UDP-3-O-[(3R)-3-hydroxyacyl]-alpha-D-glucosamine + a (3R)-hydroxyacyl-[ACP] = a UDP-2-N,3-O-bis[(3R)-3-hydroxyacyl]-alpha-D-glucosamine + holo-[ACP] + H(+). It functions in the pathway bacterial outer membrane biogenesis; LPS lipid A biosynthesis. Catalyzes the N-acylation of UDP-3-O-acylglucosamine using 3-hydroxyacyl-ACP as the acyl donor. Is involved in the biosynthesis of lipid A, a phosphorylated glycolipid that anchors the lipopolysaccharide to the outer membrane of the cell. In Shewanella frigidimarina (strain NCIMB 400), this protein is UDP-3-O-acylglucosamine N-acyltransferase.